A 310-amino-acid polypeptide reads, in one-letter code: Acetyl-coenzyme A carboxylase carboxyl transferase subunit alpha (310 aa).

The 251-residue stretch at 36-286 folds into the CoA carboxyltransferase C-terminal domain; sequence NLEKEITKTY…GEYILKQLDE (251 aa).

Belongs to the AccA family. Acetyl-CoA carboxylase is a heterohexamer composed of biotin carboxyl carrier protein (AccB), biotin carboxylase (AccC) and two subunits each of ACCase subunit alpha (AccA) and ACCase subunit beta (AccD).

The protein resides in the cytoplasm. It carries out the reaction N(6)-carboxybiotinyl-L-lysyl-[protein] + acetyl-CoA = N(6)-biotinyl-L-lysyl-[protein] + malonyl-CoA. The protein operates within lipid metabolism; malonyl-CoA biosynthesis; malonyl-CoA from acetyl-CoA: step 1/1. Functionally, component of the acetyl coenzyme A carboxylase (ACC) complex. First, biotin carboxylase catalyzes the carboxylation of biotin on its carrier protein (BCCP) and then the CO(2) group is transferred by the carboxyltransferase to acetyl-CoA to form malonyl-CoA. In Campylobacter fetus subsp. fetus (strain 82-40), this protein is Acetyl-coenzyme A carboxylase carboxyl transferase subunit alpha.